The following is a 303-amino-acid chain: Acetaldehyde dehydrogenase 2 (303 aa).

The active-site Acyl-thioester intermediate is Cys130. NAD(+)-binding positions include 161-169 and Asn272; that span reads SVGPGTRKN.

The protein belongs to the acetaldehyde dehydrogenase family.

The catalysed reaction is acetaldehyde + NAD(+) + CoA = acetyl-CoA + NADH + H(+). The protein is Acetaldehyde dehydrogenase 2 of Burkholderia vietnamiensis (strain G4 / LMG 22486) (Burkholderia cepacia (strain R1808)).